We begin with the raw amino-acid sequence, 191 residues long: Probable protein-S-isoprenylcysteine O-methyltransferase (191 aa).

The next 3 membrane-spanning stretches (helical) occupy residues 8 to 28, 45 to 65, and 66 to 86; these read WLFAAALVIFHGSEYVLAAAF, YVLAMSFAMLEHLTEALLFPE, and LKEYWFVSYVGLVMVIIGEVI. S-adenosyl-L-methionine is bound by residues 110 to 113, Y118, and 123 to 126; these read HKLI and HPGY. A helical membrane pass occupies residues 129 to 149; sequence FLIWAVGTQVMLCNPLSTVAF. A substrate-binding site is contributed by R160. E164 provides a ligand contact to S-adenosyl-L-methionine.

The protein belongs to the class VI-like SAM-binding methyltransferase superfamily. Isoprenylcysteine carboxyl methyltransferase family. Requires Zn(2+) as cofactor.

The protein localises to the endoplasmic reticulum membrane. It catalyses the reaction [protein]-C-terminal S-[(2E,6E)-farnesyl]-L-cysteine + S-adenosyl-L-methionine = [protein]-C-terminal S-[(2E,6E)-farnesyl]-L-cysteine methyl ester + S-adenosyl-L-homocysteine. In terms of biological role, catalyzes the post-translational methylation of isoprenylated C-terminal cysteine residues. Carboxyl methylation is a reversible and potentially regulated step in the post-translational modification of prenylated proteins. This Oryza sativa subsp. indica (Rice) protein is Probable protein-S-isoprenylcysteine O-methyltransferase (ICMT).